We begin with the raw amino-acid sequence, 237 residues long: Apoptosis regulator OPG045 (237 aa).

It belongs to the orthopoxvirus OPG045 family. In terms of assembly, interacts with host BAK1, BAX and BID.

It localises to the host mitochondrion outer membrane. The protein resides in the host cytoplasm. Its function is as follows. Plays a role in the inhibition of host apoptosis. Interacts with host BAX and thereby inhibits its activity. This is Apoptosis regulator OPG045 (OPG045) from Homo sapiens (Human).